The chain runs to 430 residues: Adenylosuccinate synthetase (430 aa).

Residues Gly12–Lys18 and Gly40–Thr42 each bind GTP. Residue Asp13 is the Proton acceptor of the active site. Mg(2+) is bound by residues Asp13 and Gly40. Residues Asp13–Lys16, Asn38–His41, Thr128, Arg142, Gln223, Thr238, and Arg302 each bind IMP. The active-site Proton donor is His41. Residue Thr298 to Arg304 coordinates substrate. Residues Arg304, Ser330–Asp332, and Ser412–Gly414 contribute to the GTP site.

It belongs to the adenylosuccinate synthetase family. As to quaternary structure, homodimer. Mg(2+) is required as a cofactor.

The protein localises to the cytoplasm. The enzyme catalyses IMP + L-aspartate + GTP = N(6)-(1,2-dicarboxyethyl)-AMP + GDP + phosphate + 2 H(+). It functions in the pathway purine metabolism; AMP biosynthesis via de novo pathway; AMP from IMP: step 1/2. Its function is as follows. Plays an important role in the de novo pathway of purine nucleotide biosynthesis. Catalyzes the first committed step in the biosynthesis of AMP from IMP. The polypeptide is Adenylosuccinate synthetase (Streptococcus uberis (strain ATCC BAA-854 / 0140J)).